A 419-amino-acid polypeptide reads, in one-letter code: UDP-N-acetylglucosamine 1-carboxyvinyltransferase (419 aa).

Position 22-23 (lysine 22–asparagine 23) interacts with phosphoenolpyruvate. Arginine 91 contributes to the UDP-N-acetyl-alpha-D-glucosamine binding site. The active-site Proton donor is the cysteine 115. Cysteine 115 bears the 2-(S-cysteinyl)pyruvic acid O-phosphothioketal mark. UDP-N-acetyl-alpha-D-glucosamine is bound by residues arginine 120–leucine 124, lysine 160–valine 163, aspartate 305, and isoleucine 327.

Belongs to the EPSP synthase family. MurA subfamily.

It localises to the cytoplasm. It catalyses the reaction phosphoenolpyruvate + UDP-N-acetyl-alpha-D-glucosamine = UDP-N-acetyl-3-O-(1-carboxyvinyl)-alpha-D-glucosamine + phosphate. It participates in cell wall biogenesis; peptidoglycan biosynthesis. In vitro inhibited by covalent binding of fosfomycin and the fungal product terreic acid in the presence of substrate UDP-N-acetylglucosamine, with an inactivation rate constant of 130 M(-1)sec(-1) for terreic acid. Its function is as follows. Cell wall formation. Adds enolpyruvyl to UDP-N-acetylglucosamine. Target for the antibiotic fosfomycin. The polypeptide is UDP-N-acetylglucosamine 1-carboxyvinyltransferase (Enterobacter cloacae subsp. cloacae (strain ATCC 13047 / DSM 30054 / NBRC 13535 / NCTC 10005 / WDCM 00083 / NCDC 279-56)).